A 476-amino-acid chain; its full sequence is Bifunctional protein HldE (476 aa).

The ribokinase stretch occupies residues 1-318; it reads MKVTLPDFRR…ENAIRGRAET (318 aa). ATP is bound at residue 195-198; it reads NLSE. Asp264 is an active-site residue. A cytidylyltransferase region spans residues 344–476; that stretch reads MTNGIFDILH…IIQSIKNGLG (133 aa).

The protein in the N-terminal section; belongs to the carbohydrate kinase PfkB family. This sequence in the C-terminal section; belongs to the cytidylyltransferase family. As to quaternary structure, homodimer.

It catalyses the reaction D-glycero-beta-D-manno-heptose 7-phosphate + ATP = D-glycero-beta-D-manno-heptose 1,7-bisphosphate + ADP + H(+). The enzyme catalyses D-glycero-beta-D-manno-heptose 1-phosphate + ATP + H(+) = ADP-D-glycero-beta-D-manno-heptose + diphosphate. Its pathway is nucleotide-sugar biosynthesis; ADP-L-glycero-beta-D-manno-heptose biosynthesis; ADP-L-glycero-beta-D-manno-heptose from D-glycero-beta-D-manno-heptose 7-phosphate: step 1/4. It participates in nucleotide-sugar biosynthesis; ADP-L-glycero-beta-D-manno-heptose biosynthesis; ADP-L-glycero-beta-D-manno-heptose from D-glycero-beta-D-manno-heptose 7-phosphate: step 3/4. In terms of biological role, catalyzes the phosphorylation of D-glycero-D-manno-heptose 7-phosphate at the C-1 position to selectively form D-glycero-beta-D-manno-heptose-1,7-bisphosphate. Functionally, catalyzes the ADP transfer from ATP to D-glycero-beta-D-manno-heptose 1-phosphate, yielding ADP-D-glycero-beta-D-manno-heptose. In Yersinia enterocolitica serotype O:8 / biotype 1B (strain NCTC 13174 / 8081), this protein is Bifunctional protein HldE.